The following is a 943-amino-acid chain: Mechanosensitive ion channel protein BA (943 aa).

The disordered stretch occupies residues 1–67 (MPNPNDVTID…PPSSSLGFGH (67 aa)). The Cytoplasmic segment spans residues 1–107 (MPNPNDVTID…AVLNFSTVTR (107 aa)). Residues 14–37 (TSVSSRGQTGARNNSTNIPNSPSG) are compositionally biased toward polar residues. Residues 108–130 (YLIYIAPLAALLAIPIIVGATAA) traverse the membrane as a helical segment. Residues 131-149 (EDAKIGGVSLPWFFCWVEV) are Lumenal-facing. Residues 150 to 175 (VWVSLWVCKLVAKVIPFVFQFVCGIV) form a helical membrane-spanning segment. Over 176–195 (SAGTRKYALILRNLEIPITM) the chain is Cytoplasmic. A helical transmembrane segment spans residues 196–214 (VLWMIVSLVTFLPIMVYNP). The Lumenal portion of the chain corresponds to 215–233 (RNKREGDTETKSWEKSVKN). A helical membrane pass occupies residues 234–259 (VLFAFLVCALIFLGEKTLVQLISISY). Topologically, residues 260-468 (HRKQFDARIK…DQAIHVLDNL (209 aa)) are cytoplasmic. An EF-hand domain is found at 412–447 (GKEAEAEECFTMLDRDGNGDISLDEIILAISEIGRT). 5 residues coordinate Ca(2+): Asp425, Asp427, Asn429, Asp431, and Glu436. Residues 469–489 (LATIAFIIAVLVFVSFVTSGF) traverse the membrane as a helical segment. At 490–502 (GTVIAAGATSLLS) the chain is on the lumenal side. A helical membrane pass occupies residues 503-523 (LSFVFATTAQEVLGSCIFLFV). At 524 to 943 (KHPFDIGDRV…QRRNYESRRL (420 aa)) the chain is on the cytoplasmic side. Residues 677–943 (PGAAAEDAAA…QRRNYESRRL (267 aa)) are disordered. 2 stretches are compositionally biased toward low complexity: residues 678-687 (GAAAEDAAAA) and 744-759 (GASATAATGNNSAGSA). The segment covering 760 to 781 (YSETTLNNTVSEPYQRSFTPNT) has biased composition (polar residues). Basic and acidic residues predominate over residues 798 to 810 (TERHLGVSHDSIA). Over residues 827 to 842 (TTANQSLASPTTMQSE) the composition is skewed to polar residues. A compositionally biased stretch (low complexity) spans 857-880 (PSSSQYSQQYPQQQSQSPYSYTYS). A compositionally biased stretch (polar residues) spans 886–904 (PESSLQPLEHTTSYNQSLP). Positions 916–943 (NSLEGHSPHVDPRHMTEEQRRNYESRRL) are enriched in basic and acidic residues.

Belongs to the MscS (TC 1.A.23) family.

It localises to the cell membrane. It catalyses the reaction Ca(2+)(in) = Ca(2+)(out). Acts as a mechanosensitive calcium channel in response to membrane stretch. Regulates intracellular calcium levels and cell volume for survival in response to hypo-osmotic shock. Involved in maintaining vacuole integrity and protecting the nuclear envelope upon hypo-osmotic shock. seems to contribute to CaCl2 toxicityIn contracstz to mscA, mscB seems to contribute to CaCl(2) toxicity. The protein is Mechanosensitive ion channel protein BA of Emericella nidulans (strain FGSC A4 / ATCC 38163 / CBS 112.46 / NRRL 194 / M139) (Aspergillus nidulans).